The following is a 112-amino-acid chain: Conotoxin vil14.4 (112 aa).

A signal peptide spans 1–22 (MGFRVLVLVVMATTSALPFTFF). The propeptide occupies 23–85 (EEPGRSPFRP…FAELSVGQRR (63 aa)). Cystine bridges form between cysteine 91-cysteine 111 and cysteine 95-cysteine 107.

Belongs to the conotoxin R superfamily. In terms of tissue distribution, expressed by the venom duct.

Its subcellular location is the secreted. The polypeptide is Conotoxin vil14.4 (Conus villepinii (Villepin's cone)).